Here is a 1151-residue protein sequence, read N- to C-terminus: Chromosome partition protein Smc (1151 aa).

32 to 39 (PNGCGKSN) lines the ATP pocket. 4 coiled-coil regions span residues 170-218 (ISGL…AARY), 342-379 (IGRL…ALGE), 407-508 (DSRT…REAQ), and 633-994 (LKQL…EGRE). Basic and acidic residues-rich tracts occupy residues 421-438 (RARE…RAAE) and 465-480 (DEAR…EARA). 3 disordered regions span residues 421 to 483 (RARE…AQRS), 806 to 826 (SAEL…AAEA), and 862 to 889 (LRAA…AEAR). Residues 866-889 (QEAEREAERQAGESREARARAEAR) show a composition bias toward basic and acidic residues.

It belongs to the SMC family. As to quaternary structure, homodimer.

Its subcellular location is the cytoplasm. Its function is as follows. Required for chromosome condensation and partitioning. The polypeptide is Chromosome partition protein Smc (Cereibacter sphaeroides (strain ATCC 17029 / ATH 2.4.9) (Rhodobacter sphaeroides)).